The sequence spans 676 residues: DNA ligase (676 aa).

Residues 41–45 (DLTYD), 90–91 (SL), and E123 each bind NAD(+). K125 acts as the N6-AMP-lysine intermediate in catalysis. Residues R146, E180, K293, and K317 each coordinate NAD(+). Zn(2+) is bound by residues C408, C411, C424, and C429.

The protein belongs to the NAD-dependent DNA ligase family. LigA subfamily. Mg(2+) serves as cofactor. Requires Mn(2+) as cofactor.

The enzyme catalyses NAD(+) + (deoxyribonucleotide)n-3'-hydroxyl + 5'-phospho-(deoxyribonucleotide)m = (deoxyribonucleotide)n+m + AMP + beta-nicotinamide D-nucleotide.. Functionally, DNA ligase that catalyzes the formation of phosphodiester linkages between 5'-phosphoryl and 3'-hydroxyl groups in double-stranded DNA using NAD as a coenzyme and as the energy source for the reaction. It is essential for DNA replication and repair of damaged DNA. The protein is DNA ligase of Borrelia turicatae (strain 91E135).